The chain runs to 545 residues: E3 ubiquitin-protein ligase ipaH9.8 (545 aa).

The segment at 1 to 242 (MLPINNNFSL…YHGPRIYFSM (242 aa)) is interaction with target proteins. LRR repeat units lie at residues 57–77 (NSDELRLDRLNLSSLPDNLPA), 78–99 (QITLLNVSYNQLTNLPELPVTL), 100–117 (KKLYSASNKLSELPVLPP), 118–139 (ALESLQVQHNELENLPALPDSL), 140–157 (LTMNISYNEIVSLPSLPL), 158–179 (ALKNLRATRNFLTELPAFSEGN), 182–203 (VVREYFFDRNQISHIPESILNL), and 205–228 (NECSIHISDNPLSSHALQALQRLT). Residues 243–250 (SDGQQNTL) are linker. Residues 251 to 545 (HRPLADAVTA…SENGSQLHHS (295 aa)) form an E3 ubiquitin-protein ligase catalytic domain region. In terms of domain architecture, NEL spans 253–545 (PLADAVTAWF…SENGSQLHHS (293 aa)). The active-site Glycyl thioester intermediate is the Cys337.

The protein belongs to the LRR-containing bacterial E3 ligase family. Also interacts with human and mouse U2AF1 (U2AF35). In terms of processing, ubiquitinated in the presence of host E1 ubiquitin-activating enzyme, E2 ubiquitin-conjugating enzyme and ubiquitin.

It localises to the secreted. Its subcellular location is the host cytoplasm. It is found in the host nucleus. The catalysed reaction is S-ubiquitinyl-[E2 ubiquitin-conjugating enzyme]-L-cysteine + [acceptor protein]-L-lysine = [E2 ubiquitin-conjugating enzyme]-L-cysteine + N(6)-ubiquitinyl-[acceptor protein]-L-lysine.. With respect to regulation, exists in an autoinhibited state in the absence of substrate protein, due to interactions of the leucine-rich repeats with NEL domain. Is activated upon binding to a substrate protein. In terms of biological role, effector E3 ubiquitin ligase that interferes with host's ubiquitination pathway and modulates the acute inflammatory responses, thus facilitating bacterial colonization within the host cell. Interacts with IKBKG (NEMO) and TNIP1 (ABIN-1), a ubiquitin-binding adapter protein, which results in TNIP1-dependent 'Lys-27'-linked polyubiquitination of IKBKG. Consequently, polyubiquitinated IKBKG undergoes proteasome-dependent degradation, which perturbs NF-kappa-B activation during bacterial infection. Mediates polyubiquitination of host U2AF1, leading to its proteasomal degradation. Catalyzes 'Lys-48'-linked polyubiquitination and subsequent degradation of a subset of host guanylate-binding proteins (GBP1, GBP2, GBP4 and GBP6), thereby suppressing host cell defense. In contrast, host GBP3 and GBP7 are not ubiquitinated by IpaH9.8. Uses UBE2D2 (UBCH5B) as an E2 ubiquitin-conjugating enzyme. The protein is E3 ubiquitin-protein ligase ipaH9.8 (ipaH9.8) of Shigella boydii serotype 4 (strain Sb227).